Here is a 140-residue protein sequence, read N- to C-terminus: Dehydratase ustZ (140 aa).

The EthD domain maps to 18–113 (PGISTEDYRN…GPDHEKFADT (96 aa)).

Belongs to the tpcK family.

It carries out the reaction naphtopyrone YWA1 = norrubrofusarin + H2O + H(+). Its pathway is secondary metabolite biosynthesis. Dehydratase; part of the gene cluster that mediates the biosynthesis of ustilaginoidins, dimeric gamma-naphthopyrones isolated from different fungal species. The first step in the biosynthesis of ustilaginoidins is the production of gamma-naphthopyrone precursor YWA1 by the non-reducing polyketide synthase ustP, via condensation of one acetyl-CoA starter unit with 6 malonyl-CoA units. YWA1 is then probably substrate of the ustZ to yield norrubrofusarin via a dehydration reaction. A key enzyme in the biosynthetic pathway is the laccase ustL, which catalyzes the oxidative dimerization of norrubrofusarin to ustilaginoidin A. It can produce the M- and P-atropisomers in varying amounts, depending on the reaction conditions. For the biosynthesis of 3-methylustilaginoid in derivatives such as chaetochromin A, a methylated derivative of YWA1 is required. The C-methylation is considered to be catalyzed by ustM, the phosphopantetheine attachment site of which indicates that it acts on the growing polyketide chain before release of the product. For the biosynthesis of chaetochromin A, it is assumed that saturation of the D2 double bond takes place before dimerization, and is probably catalyzed by an external reductase because no candidate gene was identified within the cluster. The chain is Dehydratase ustZ from Ustilaginoidea virens (Rice false smut fungus).